Consider the following 417-residue polypeptide: Gamma-glutamyl phosphate reductase (417 aa).

Belongs to the gamma-glutamyl phosphate reductase family.

Its subcellular location is the cytoplasm. The enzyme catalyses L-glutamate 5-semialdehyde + phosphate + NADP(+) = L-glutamyl 5-phosphate + NADPH + H(+). It participates in amino-acid biosynthesis; L-proline biosynthesis; L-glutamate 5-semialdehyde from L-glutamate: step 2/2. In terms of biological role, catalyzes the NADPH-dependent reduction of L-glutamate 5-phosphate into L-glutamate 5-semialdehyde and phosphate. The product spontaneously undergoes cyclization to form 1-pyrroline-5-carboxylate. This is Gamma-glutamyl phosphate reductase from Heliobacterium modesticaldum (strain ATCC 51547 / Ice1).